A 227-amino-acid polypeptide reads, in one-letter code: tRNA (guanine-N(1)-)-methyltransferase (227 aa).

S-adenosyl-L-methionine contacts are provided by residues Gly110 and 129 to 134; that span reads IGDYVL.

This sequence belongs to the RNA methyltransferase TrmD family. In terms of assembly, homodimer.

The protein localises to the cytoplasm. The catalysed reaction is guanosine(37) in tRNA + S-adenosyl-L-methionine = N(1)-methylguanosine(37) in tRNA + S-adenosyl-L-homocysteine + H(+). Its function is as follows. Specifically methylates guanosine-37 in various tRNAs. In Mycoplasmopsis agalactiae (strain NCTC 10123 / CIP 59.7 / PG2) (Mycoplasma agalactiae), this protein is tRNA (guanine-N(1)-)-methyltransferase.